A 130-amino-acid chain; its full sequence is DNA-directed RNA polymerase subunit omega (130 aa).

Residues Glu110–Glu130 form a disordered region.

The protein belongs to the RNA polymerase subunit omega family. As to quaternary structure, the RNAP catalytic core consists of 2 alpha, 1 beta, 1 beta' and 1 omega subunit. When a sigma factor is associated with the core the holoenzyme is formed, which can initiate transcription.

The catalysed reaction is RNA(n) + a ribonucleoside 5'-triphosphate = RNA(n+1) + diphosphate. Promotes RNA polymerase assembly. Latches the N- and C-terminal regions of the beta' subunit thereby facilitating its interaction with the beta and alpha subunits. The protein is DNA-directed RNA polymerase subunit omega of Afipia carboxidovorans (strain ATCC 49405 / DSM 1227 / KCTC 32145 / OM5) (Oligotropha carboxidovorans).